Reading from the N-terminus, the 839-residue chain is Protein translocase subunit SecA (839 aa).

ATP-binding positions include glutamine 85, 103–107, and aspartate 493; that span reads GEGKT. Over residues 780–790 the composition is skewed to basic and acidic residues; it reads QIHEQERERAS. A disordered region spans residues 780–839; it reads QIHEQERERASQRATTAAPQNIQSQQSANTDDLPKVERNEACPCGSGKKFKNCHGRKSFS. Residues 791–809 show a composition bias toward polar residues; it reads QRATTAAPQNIQSQQSANT. Zn(2+) is bound by residues cysteine 821, cysteine 823, cysteine 832, and histidine 833. Basic residues predominate over residues 827-839; that stretch reads KKFKNCHGRKSFS.

The protein belongs to the SecA family. Monomer and homodimer. Part of the essential Sec protein translocation apparatus which comprises SecA, SecYEG and auxiliary proteins SecDF. Other proteins may also be involved. The cofactor is Zn(2+).

Its subcellular location is the cell membrane. The protein localises to the cytoplasm. The catalysed reaction is ATP + H2O + cellular proteinSide 1 = ADP + phosphate + cellular proteinSide 2.. Part of the Sec protein translocase complex. Interacts with the SecYEG preprotein conducting channel. Has a central role in coupling the hydrolysis of ATP to the transfer of proteins into and across the cell membrane, serving as an ATP-driven molecular motor driving the stepwise translocation of polypeptide chains across the membrane. This Streptococcus pyogenes serotype M1 protein is Protein translocase subunit SecA.